The chain runs to 255 residues: 4-diphosphocytidyl-2-C-methyl-D-erythritol kinase (255 aa).

K6 is a catalytic residue. 95–105 (PVCAGLGGGSS) is a binding site for ATP. The active site involves D137.

Belongs to the GHMP kinase family. IspE subfamily.

It catalyses the reaction 4-CDP-2-C-methyl-D-erythritol + ATP = 4-CDP-2-C-methyl-D-erythritol 2-phosphate + ADP + H(+). It participates in isoprenoid biosynthesis; isopentenyl diphosphate biosynthesis via DXP pathway; isopentenyl diphosphate from 1-deoxy-D-xylulose 5-phosphate: step 3/6. Its function is as follows. Catalyzes the phosphorylation of the position 2 hydroxy group of 4-diphosphocytidyl-2C-methyl-D-erythritol. The chain is 4-diphosphocytidyl-2-C-methyl-D-erythritol kinase from Campylobacter jejuni subsp. jejuni serotype O:6 (strain 81116 / NCTC 11828).